A 118-amino-acid chain; its full sequence is Small ribosomal subunit protein uS13 (118 aa).

Residues 94–118 form a disordered region; that stretch reads SLPLRGQRTKTNARTRKGPRKPIKK.

It belongs to the universal ribosomal protein uS13 family. Part of the 30S ribosomal subunit. Forms a loose heterodimer with protein S19. Forms two bridges to the 50S subunit in the 70S ribosome.

In terms of biological role, located at the top of the head of the 30S subunit, it contacts several helices of the 16S rRNA. In the 70S ribosome it contacts the 23S rRNA (bridge B1a) and protein L5 of the 50S subunit (bridge B1b), connecting the 2 subunits; these bridges are implicated in subunit movement. Contacts the tRNAs in the A and P-sites. This Colwellia psychrerythraea (strain 34H / ATCC BAA-681) (Vibrio psychroerythus) protein is Small ribosomal subunit protein uS13.